An 882-amino-acid chain; its full sequence is Dual specificity tyrosine-phosphorylation-regulated kinase mbk-1 (882 aa).

The segment covering 1-42 has biased composition (polar residues); it reads MNTADVPDNLQSWGQQPSSSYSNTQQHSQMTNLPPINHNNLC. Disordered stretches follow at residues 1–45, 62–81, 212–239, and 255–308; these read MNTA…CDTE, QKQQ…AQRF, KQVR…ASLT, and NHYQ…NGYD. A compositionally biased stretch (low complexity) spans 64–79; it reads QQKQQEQQHIQQQNAQ. The segment covering 220-231 has biased composition (basic and acidic residues); that stretch reads KSQDAGKPKGSK. Low complexity predominate over residues 290–308; that stretch reads QQQQRQKSSRGGPYNNGYD. One can recognise a Protein kinase domain in the interval 328-649; it reads ILSDTPVGKG…PYYVVRHPFL (322 aa). ATP-binding positions include 334 to 342 and lysine 357; that span reads VGKGSFGQV. Residue aspartate 456 is the Proton acceptor of the active site. 2 disordered regions span residues 742-761 and 789-882; these read HNPN…QYQQ and QQQQ…NNKL. 2 stretches are compositionally biased toward low complexity: residues 747–761 and 789–810; these read QYSQ…QYQQ and QQQQ…QHLQ. Basic and acidic residues predominate over residues 816–827; sequence RQQDQNEWRNQF. Positions 843 to 869 are enriched in polar residues; it reads SVSNQISRNQFNPQQVSMTHGNVNANN.

It belongs to the protein kinase superfamily. CMGC Ser/Thr protein kinase family. MNB/DYRK subfamily. Mg(2+) serves as cofactor. In terms of tissue distribution, expressed in all somatic cells.

The protein localises to the nucleus. The enzyme catalyses L-seryl-[protein] + ATP = O-phospho-L-seryl-[protein] + ADP + H(+). It catalyses the reaction L-threonyl-[protein] + ATP = O-phospho-L-threonyl-[protein] + ADP + H(+). The catalysed reaction is L-tyrosyl-[protein] + ATP = O-phospho-L-tyrosyl-[protein] + ADP + H(+). Possible role in the function of olfactory neurons. The chain is Dual specificity tyrosine-phosphorylation-regulated kinase mbk-1 from Caenorhabditis elegans.